Consider the following 344-residue polypeptide: Alkyl hydroperoxide reductase Rv2159c (344 aa).

Residues 49 to 50 (AG) form an important for interaction with PknI region. The active-site Cysteine sulfenic acid (-SOH) intermediate is C84.

It belongs to the AhpD family. In terms of assembly, interacts with the serine/threonine-protein kinase PknI. The PknI-Rv2159c interaction is mediated through phosphorylation independent physical interaction.

Interaction with PknI increases the peroxidase activity by several folds. Functionally, involved in protection against oxidative stresses. May play a significant role in maintaining the cellular homeostasis during stress and virulence of M.tuberculosis. In vitro, catalyzes the decomposition of cumene hydroperoxide (CHP) to acetophenone. This chain is Alkyl hydroperoxide reductase Rv2159c, found in Mycobacterium tuberculosis (strain ATCC 25618 / H37Rv).